Consider the following 411-residue polypeptide: Replication factor C subunit 2 (411 aa).

Residues 1–36 are disordered; it reads MADFFNLKARQQAAAQASSSKTPTSKQESNRLQPWV. Residues 11–27 show a composition bias toward low complexity; it reads QQAAAQASSSKTPTSKQ. Residues Val36, Arg40, 73–81, Asn195, and Arg253 contribute to the ATP site; that span reads GPPGTGKTS.

This sequence belongs to the activator 1 small subunits family. As to quaternary structure, heteropentamer of subunits RFC1, RFC2, RFC3, RFC4 and RFC5 that forms a complex with PCNA in the presence of ATP.

The protein resides in the nucleus. In terms of biological role, the elongation of primed DNA templates by DNA polymerase delta and epsilon requires the action of the accessory proteins proliferating cell nuclear antigen (PCNA) and activator 1. Subunit 2 binds ATP and single-stranded DNA. In Phaeosphaeria nodorum (strain SN15 / ATCC MYA-4574 / FGSC 10173) (Glume blotch fungus), this protein is Replication factor C subunit 2 (RFC2).